Here is a 160-residue protein sequence, read N- to C-terminus: uncharacterized protein (160 aa).

An N-terminal signal peptide occupies residues 1–18 (MELLSLAILSSFFAVANQ).

This is an uncharacterized protein from Caenorhabditis elegans.